Here is a 181-residue protein sequence, read N- to C-terminus: Achaete-scute homolog 3 (181 aa).

Residues 93–106 (AFTRKRNERERQRV) form a basic motif region. The region spanning 93 to 145 (AFTRKRNERERQRVKCVNEGYAQLRHHLPEEYLEKRLSKVETLRAAIKYINYL) is the bHLH domain. The interval 107 to 145 (KCVNEGYAQLRHHLPEEYLEKRLSKVETLRAAIKYINYL) is helix-loop-helix motif.

As to quaternary structure, efficient DNA binding requires dimerization with another bHLH protein. Widely expressed in fetal and adult tissues.

The protein resides in the nucleus. In terms of biological role, transcriptional repressor. Inhibits myogenesis. Plays a role in progenitor cells which differentiate into ductal and acinar, but not myoepithelial, cell lineages in the salivary glands. Involved in the functions of the microvillar cells and Bowman's glands and probably, in a non-cell-autonomous manner, in the development or regeneration of a complete olfactory epithelium (OE). In Homo sapiens (Human), this protein is Achaete-scute homolog 3.